The following is a 244-amino-acid chain: Transcriptional activator protein Anr (244 aa).

21-149 (APLCLPLSLN…RVMSREIRDD (129 aa)) contributes to the a nucleoside 3',5'-cyclic phosphate binding site. The region spanning 159-232 (KTADERIATF…GKEVHILDPI (74 aa)) is the HTH crp-type domain. A DNA-binding region (H-T-H motif) is located at residues 192–211 (RNEIGNYLGLAVETVSRVFT).

In terms of biological role, transcriptional activator of anaerobic gene expression. Regulates the expression of the components of the hydrogen cyanide synthase (HcnABC) in a positive manner. May also act as an iron sensor. The polypeptide is Transcriptional activator protein Anr (Pseudomonas protegens (strain DSM 19095 / LMG 27888 / CFBP 6595 / CHA0)).